Consider the following 432-residue polypeptide: Peptidase B (432 aa).

The Mn(2+) site is built by K196 and D201. K208 is an active-site residue. Residues D219, D278, and E280 each coordinate Mn(2+). R282 is an active-site residue.

This sequence belongs to the peptidase M17 family. As to quaternary structure, homohexamer. The cofactor is Mn(2+).

The protein localises to the cytoplasm. It carries out the reaction Release of an N-terminal amino acid, Xaa, from a peptide or arylamide. Xaa is preferably Glu or Asp but may be other amino acids, including Leu, Met, His, Cys and Gln.. In terms of biological role, probably plays an important role in intracellular peptide degradation. The chain is Peptidase B from Yersinia pseudotuberculosis serotype IB (strain PB1/+).